Reading from the N-terminus, the 234-residue chain is Leucyl/phenylalanyl-tRNA--protein transferase (234 aa).

This sequence belongs to the L/F-transferase family.

The protein localises to the cytoplasm. It carries out the reaction N-terminal L-lysyl-[protein] + L-leucyl-tRNA(Leu) = N-terminal L-leucyl-L-lysyl-[protein] + tRNA(Leu) + H(+). The enzyme catalyses N-terminal L-arginyl-[protein] + L-leucyl-tRNA(Leu) = N-terminal L-leucyl-L-arginyl-[protein] + tRNA(Leu) + H(+). The catalysed reaction is L-phenylalanyl-tRNA(Phe) + an N-terminal L-alpha-aminoacyl-[protein] = an N-terminal L-phenylalanyl-L-alpha-aminoacyl-[protein] + tRNA(Phe). Functions in the N-end rule pathway of protein degradation where it conjugates Leu, Phe and, less efficiently, Met from aminoacyl-tRNAs to the N-termini of proteins containing an N-terminal arginine or lysine. This is Leucyl/phenylalanyl-tRNA--protein transferase from Nitratidesulfovibrio vulgaris (strain ATCC 29579 / DSM 644 / CCUG 34227 / NCIMB 8303 / VKM B-1760 / Hildenborough) (Desulfovibrio vulgaris).